Reading from the N-terminus, the 189-residue chain is Calcyphosin (189 aa).

EF-hand domains follow at residues 21–56, 57–92, 93–128, and 136–172; these read LGIQ…LGLV, LDTA…PMSQ, AREA…RTHP, and TEEE…VSAS. Ca(2+) contacts are provided by D34, D36, S38, S40, E45, D70, D72, S74, T76, E81, D106, S108, D110, and D117. At S40 the chain carries Phosphoserine; by PKA.

In terms of assembly, monomer. Does not form oligomers in the presence of calcium. Post-translationally, phosphorylated in response to thyrotropin and cAMP. Detected in thyroid, salivary gland, lung, brain and cerebellum (at protein level).

Its subcellular location is the cytoplasm. Its function is as follows. Calcium-binding protein. May play a role in cellular signaling events (Potential). This Canis lupus familiaris (Dog) protein is Calcyphosin (CAPS).